The sequence spans 152 residues: Perlwapin (152 aa).

A signal peptide spans 1-18 (LILCVVVCTAAVLGTAAG). The WAP 1 domain occupies 19 to 61 (YESQLPGCPPGAYPAICARYCYSDRDCASGYYCCNTGCLNICV). 12 disulfide bridges follow: cysteine 26/cysteine 52, cysteine 35/cysteine 56, cysteine 39/cysteine 51, cysteine 45/cysteine 60, cysteine 69/cysteine 95, cysteine 77/cysteine 100, cysteine 82/cysteine 94, cysteine 88/cysteine 103, cysteine 112/cysteine 139, cysteine 122/cysteine 142, cysteine 126/cysteine 138, and cysteine 132/cysteine 146. In terms of domain architecture, WAP 2; atypical spans 62–107 (PKPKPGLCPSITQSPCRGNVCNNDQDCPGNRKCCGKPGCKRCYRPK). A WAP 3 domain is found at 108 to 150 (KPGSCPARKYEAGPCVVYCDGDFDCPGDKKCCGGCPRLCEKPC).

In terms of tissue distribution, component of the acid-soluble and acid-insoluble organic matrix of prismatic shell layers (at protein level).

It is found in the secreted. Inhibits growth of calcium carbonate crystals. May inhibit growth of certain crystallographic planes in the mineral phase of nacre in the shell. This is Perlwapin from Haliotis asinina (Donkey's ear abalone).